Consider the following 66-residue polypeptide: Large ribosomal subunit protein bL35 (66 aa).

This sequence belongs to the bacterial ribosomal protein bL35 family.

This Wigglesworthia glossinidia brevipalpis protein is Large ribosomal subunit protein bL35.